Reading from the N-terminus, the 242-residue chain is Immunity protein TsiV2 (242 aa).

Helical transmembrane passes span 39-59 (VFGAISAGIVPLWPFIFFADI), 66-86 (FWGFICFSLAGMAAARYLFMP), and 118-138 (FAWVGIAVCLLALAVVGPLAF).

It localises to the host membrane. In terms of biological role, immunity protein that plays a role in preventing early activation of toxin VasX. The polypeptide is Immunity protein TsiV2 (Vibrio cholerae serotype O1 (strain ATCC 39315 / El Tor Inaba N16961)).